The primary structure comprises 72 residues: UPF0270 protein YheU (72 aa).

The protein belongs to the UPF0270 family.

This Escherichia coli (strain ATCC 8739 / DSM 1576 / NBRC 3972 / NCIMB 8545 / WDCM 00012 / Crooks) protein is UPF0270 protein YheU.